Here is a 513-residue protein sequence, read N- to C-terminus: Putative ATP-dependent RNA helicase QP509L (513 aa).

In terms of domain architecture, Helicase ATP-binding spans 110–262 (KKLLSPYGRF…KIIIHHLGQP (153 aa)). 123–130 (LNTGLGKT) contributes to the ATP binding site. The DEAH box motif lies at 215 to 218 (DEAH).

It belongs to the DEAD box helicase family. DEAH subfamily.

It carries out the reaction ATP + H2O = ADP + phosphate + H(+). The sequence is that of Putative ATP-dependent RNA helicase QP509L from Ornithodoros (relapsing fever ticks).